Consider the following 92-residue polypeptide: Acylphosphatase (92 aa).

Cysteines 5 and 49 form a disulfide. The 88-residue stretch at 5–92 (CIIAWVYGRV…SGELTDFRIR (88 aa)) folds into the Acylphosphatase-like domain. Active-site residues include R20 and N38.

This sequence belongs to the acylphosphatase family.

The enzyme catalyses an acyl phosphate + H2O = a carboxylate + phosphate + H(+). This Escherichia coli O157:H7 protein is Acylphosphatase.